Consider the following 398-residue polypeptide: Transposase for insertion sequence element ISRM5 (398 aa).

Belongs to the transposase mutator family.

Functionally, required for the transposition of the insertion element. This chain is Transposase for insertion sequence element ISRM5, found in Rhizobium meliloti (strain 1021) (Ensifer meliloti).